The primary structure comprises 71 residues: Gas vesicle protein A (71 aa).

This sequence belongs to the gas vesicle GvpA family. As to quaternary structure, the gas vesicle shell is 2 nm thick and consists of a single layer of this protein. It forms helical ribs nearly perpendicular to the long axis of the vesicle.

The protein localises to the gas vesicle shell. Functionally, gas vesicles are hollow, gas filled proteinaceous nanostructures found in some microorganisms. During planktonic growth they allow positioning of the organism at a favorable depth for light or nutrient acquisition. GvpA forms the protein shell. Its function is as follows. Cluster expression in E.coli (gvpA1-gvpA2-gvpC-gvpN-gvpJ-gvpK-gvpF-gvpG-gvpV-gvpW) allows cells to float and produces irregularly shaped gas vesicles. This is Gas vesicle protein A from Nostoc sp. (strain PCC 7120 / SAG 25.82 / UTEX 2576).